Consider the following 288-residue polypeptide: Thiamine-monophosphate kinase (288 aa).

Residues D20, T30, and D32 each coordinate Mg(2+). Position 39 (D39) interacts with substrate. Residues D60 and D107 each contribute to the Mg(2+) site. ATP-binding positions include 106 to 107 (GD) and R130. D188 is a binding site for Mg(2+). Residue S190 participates in ATP binding. D191 provides a ligand contact to Mg(2+). Residue W286 participates in substrate binding.

Belongs to the thiamine-monophosphate kinase family.

It carries out the reaction thiamine phosphate + ATP = thiamine diphosphate + ADP. The protein operates within cofactor biosynthesis; thiamine diphosphate biosynthesis; thiamine diphosphate from thiamine phosphate: step 1/1. In terms of biological role, catalyzes the ATP-dependent phosphorylation of thiamine-monophosphate (TMP) to form thiamine-pyrophosphate (TPP), the active form of vitamin B1. The polypeptide is Thiamine-monophosphate kinase (Halobacterium salinarum (strain ATCC 700922 / JCM 11081 / NRC-1) (Halobacterium halobium)).